The following is a 271-amino-acid chain: MPELPEVETTVRGLARFLQGERITRTVTNRPDMRFPFPDGLGQALTGATVVSLGRRAKYGLIHTDRDQTMIFHLGMSGRWRIDPDETDKHDHLLIETADHRFALCDPRRFGWVDLVGTQALDQWPGFAAMGPEPLGDALTIEHLRAALSGRKQAIKLCLLDQAIVAGLGNIYVCEALWHARIHPRKAGGRVSKQALSLLITAIRDVLEQSIRDGGSSLRDYAQPDGELGYFATRFQVYGRDGQPCHRDDGGTIRRFAQGGRSTWYCPRCQR.

P2 serves as the catalytic Schiff-base intermediate with DNA. E3 serves as the catalytic Proton donor. K58 (proton donor; for beta-elimination activity) is an active-site residue. DNA is bound by residues H90, R108, and R151. The FPG-type; degenerate zinc finger occupies 236 to 271 (QVYGRDGQPCHRDDGGTIRRFAQGGRSTWYCPRCQR). The Proton donor; for delta-elimination activity role is filled by R261.

This sequence belongs to the FPG family. As to quaternary structure, monomer. Requires Zn(2+) as cofactor.

The enzyme catalyses Hydrolysis of DNA containing ring-opened 7-methylguanine residues, releasing 2,6-diamino-4-hydroxy-5-(N-methyl)formamidopyrimidine.. It catalyses the reaction 2'-deoxyribonucleotide-(2'-deoxyribose 5'-phosphate)-2'-deoxyribonucleotide-DNA = a 3'-end 2'-deoxyribonucleotide-(2,3-dehydro-2,3-deoxyribose 5'-phosphate)-DNA + a 5'-end 5'-phospho-2'-deoxyribonucleoside-DNA + H(+). Its function is as follows. Involved in base excision repair of DNA damaged by oxidation or by mutagenic agents. Acts as a DNA glycosylase that recognizes and removes damaged bases. Has a preference for oxidized purines, such as 7,8-dihydro-8-oxoguanine (8-oxoG). Has AP (apurinic/apyrimidinic) lyase activity and introduces nicks in the DNA strand. Cleaves the DNA backbone by beta-delta elimination to generate a single-strand break at the site of the removed base with both 3'- and 5'-phosphates. This chain is Formamidopyrimidine-DNA glycosylase, found in Erythrobacter litoralis (strain HTCC2594).